The primary structure comprises 193 residues: uncharacterized protein (193 aa).

Residues 158 to 193 (YNPIYDDHNPLPPEKKKSILSRTRSTKLSSGEITPV) are disordered. Residues 162–174 (YDDHNPLPPEKKK) are compositionally biased toward basic and acidic residues. Positions 177 to 193 (LSRTRSTKLSSGEITPV) are enriched in polar residues.

This is an uncharacterized protein from Micromonas pusilla (Picoplanktonic green alga).